Reading from the N-terminus, the 495-residue chain is Probable biotin-dependent acyl-coenzyme A carboxylase beta3 subunit (495 aa).

Residues 1–236 (MSRITTDQLR…PLPAPQTPAP (236 aa)) form the CoA carboxyltransferase N-terminal domain. One can recognise a CoA carboxyltransferase C-terminal domain in the interval 242 to 470 (TWDSVVASRR…SNAIAAEVHA (229 aa)).

Belongs to the AccD/PCCB family. As to quaternary structure, the biotin-dependent acyl-CoA carboxylase complex is composed of an AccA protein, which contains the biotin carboxylase (BC) and biotin carboxyl carrier protein (BCCP) domains, and an AccD protein, which contains the carboxyl transferase (CT) domain.

Component of a biotin-dependent acyl-CoA carboxylase complex. This subunit transfers the CO2 from carboxybiotin to the CoA ester substrate. The chain is Probable biotin-dependent acyl-coenzyme A carboxylase beta3 subunit (accD3) from Mycobacterium bovis (strain ATCC BAA-935 / AF2122/97).